Here is a 135-residue protein sequence, read N- to C-terminus: Large ribosomal subunit protein uL18 (135 aa).

Residues 1-25 (MAQTENQKSKRIPLGKDVSTQRRLS) form a disordered region.

This sequence belongs to the universal ribosomal protein uL18 family. Part of the 50S ribosomal subunit; part of the 5S rRNA/L5/L18/L25 subcomplex. Contacts the 5S and 23S rRNAs.

In terms of biological role, this is one of the proteins that bind and probably mediate the attachment of the 5S RNA into the large ribosomal subunit, where it forms part of the central protuberance. The protein is Large ribosomal subunit protein uL18 of Nocardia farcinica (strain IFM 10152).